A 369-amino-acid polypeptide reads, in one-letter code: H-2 class I histocompatibility antigen, K-B alpha chain (369 aa).

Residues 1–21 (MVPCTLLLLLAAALAPTQTRA) form the signal peptide. Residues 22-111 (GPHSLRYFVT…LLGYYNQSKG (90 aa)) are alpha-1. The Extracellular portion of the chain corresponds to 22 to 305 (GPHSLRYFVT…EPPPSTVSNM (284 aa)). N-linked (GlcNAc...) asparagine glycosylation occurs at Asn107. Residues 112 to 203 (GSHTIQVISG…KNGNATLLRT (92 aa)) form an alpha-2 region. A disulfide bridge connects residues Cys122 and Cys185. Asn197 carries N-linked (GlcNAc...) asparagine glycosylation. Positions 204–295 (DSPKAHVTHH…GLPEPLTLRW (92 aa)) are alpha-3. The Ig-like C1-type domain maps to 206 to 294 (PKAHVTHHSR…QGLPEPLTLR (89 aa)). A disulfide bridge links Cys224 with Cys280. Residues 296–305 (EPPPSTVSNM) form a connecting peptide region. Residues 306–328 (ATVAVLVVLGAAIVTGAVVAFVM) traverse the membrane as a helical segment. Over 329 to 369 (KMRRRNTGGKGGDYALAPGSQTSDLSLPDCKVMVHDPHSLA) the chain is Cytoplasmic. Phosphoserine is present on residues Ser351 and Ser354.

The protein belongs to the MHC class I family. As to quaternary structure, heterodimer of an alpha chain and a beta chain (beta-2-microglobulin).

It is found in the membrane. Functionally, involved in the presentation of foreign antigens to the immune system. The polypeptide is H-2 class I histocompatibility antigen, K-B alpha chain (H2-K1) (Mus musculus (Mouse)).